A 369-amino-acid polypeptide reads, in one-letter code: Histidinol-phosphate aminotransferase (369 aa).

The disordered stretch occupies residues 1-39; the sequence is MSFGIDDLPVRDELRGKSPYGAPQLDVPVRLNTNENPYP. The residue at position 230 (K230) is an N6-(pyridoxal phosphate)lysine.

This sequence belongs to the class-II pyridoxal-phosphate-dependent aminotransferase family. Histidinol-phosphate aminotransferase subfamily. In terms of assembly, homodimer. Pyridoxal 5'-phosphate serves as cofactor.

The catalysed reaction is L-histidinol phosphate + 2-oxoglutarate = 3-(imidazol-4-yl)-2-oxopropyl phosphate + L-glutamate. Its pathway is amino-acid biosynthesis; L-histidine biosynthesis; L-histidine from 5-phospho-alpha-D-ribose 1-diphosphate: step 7/9. This is Histidinol-phosphate aminotransferase (hisC) from Streptomyces avermitilis (strain ATCC 31267 / DSM 46492 / JCM 5070 / NBRC 14893 / NCIMB 12804 / NRRL 8165 / MA-4680).